The primary structure comprises 2178 residues: DNA-directed RNA polymerase subunit beta (2178 aa).

3 insert regions span residues 269-325 (SKKI…TPFV), 714-1508 (KRID…LFYN), and 1703-1900 (KGND…LQPM).

It belongs to the RNA polymerase beta chain family. As to quaternary structure, in plastids the minimal PEP RNA polymerase catalytic core is composed of four subunits: alpha, beta, beta', and beta''. When a (nuclear-encoded) sigma factor is associated with the core the holoenzyme is formed, which can initiate transcription.

The protein resides in the plastid. The protein localises to the chloroplast. It catalyses the reaction RNA(n) + a ribonucleoside 5'-triphosphate = RNA(n+1) + diphosphate. In terms of biological role, DNA-dependent RNA polymerase catalyzes the transcription of DNA into RNA using the four ribonucleoside triphosphates as substrates. The protein is DNA-directed RNA polymerase subunit beta of Tupiella akineta (Green alga).